Here is a 124-residue protein sequence, read N- to C-terminus: NLLQFEKMIKKMTGKEPVVSYAFYGCYCGSGGQGKPKDATDRCCFVHDCCYGKVTGCDPKMDVYSFSEENGDIVCGGDDPCKKEICECDRAAAICFRDNLNTYNDKKYWAFGAKNCPQEESEAC.

Disulfide bonds link Cys26/Cys116, Cys28/Cys44, Cys43/Cys95, Cys49/Cys124, Cys50/Cys88, Cys57/Cys81, and Cys75/Cys86. 3 residues coordinate Ca(2+): Tyr27, Gly29, and Gly31. The active site involves His47. Asp48 is a Ca(2+) binding site. Residue Asp89 is part of the active site.

The protein belongs to the phospholipase A2 family. Group II subfamily. D49 sub-subfamily. It depends on Ca(2+) as a cofactor. In terms of tissue distribution, expressed by the venom gland.

The protein localises to the secreted. It carries out the reaction a 1,2-diacyl-sn-glycero-3-phosphocholine + H2O = a 1-acyl-sn-glycero-3-phosphocholine + a fatty acid + H(+). Its function is as follows. PLA2 catalyzes the calcium-dependent hydrolysis of the 2-acyl groups in 3-sn-phosphoglycerides. The sequence is that of Acidic phospholipase A2 BA2 from Gloydius halys (Chinese water mocassin).